We begin with the raw amino-acid sequence, 63 residues long: UPF0337 protein SERP0494 (63 aa).

A disordered region spans residues 1 to 46 (MAEDKFEQAKGNIKETVGNATDNKELEKDGKGDKASGKAKEAVENV). Positions 22 to 46 (DNKELEKDGKGDKASGKAKEAVENV) are enriched in basic and acidic residues.

The protein belongs to the UPF0337 (CsbD) family.

The chain is UPF0337 protein SERP0494 from Staphylococcus epidermidis (strain ATCC 35984 / DSM 28319 / BCRC 17069 / CCUG 31568 / BM 3577 / RP62A).